The following is a 156-amino-acid chain: Male-specific protein scotti (156 aa).

The segment at 26 to 48 (TADAGDDADTLEDGQQQQQQQHQ) is disordered. Residue Asn-137 is glycosylated (N-linked (GlcNAc...) asparagine).

It belongs to the male-specific scotti family.

Its function is as follows. Post-meiotically transcribed gene that has a role in late spermiogenesis; required for actin cone progression during spermatid individualization. The sequence is that of Male-specific protein scotti from Drosophila erecta (Fruit fly).